Consider the following 178-residue polypeptide: Large ribosomal subunit protein eL20 (178 aa).

This sequence belongs to the eukaryotic ribosomal protein eL20 family.

This Castanea sativa (Sweet chestnut) protein is Large ribosomal subunit protein eL20 (RPL18A).